Consider the following 368-residue polypeptide: Protein mab-21-like (368 aa).

Belongs to the mab-21 family.

This is Protein mab-21-like from Drosophila pseudoobscura pseudoobscura (Fruit fly).